The following is a 141-amino-acid chain: Small ribosomal subunit protein uS12 (141 aa).

The interval T118–K141 is disordered.

The protein belongs to the universal ribosomal protein uS12 family. In terms of assembly, part of the 30S ribosomal subunit. Contacts proteins S8 and S17. May interact with IF1 in the 30S initiation complex.

Functionally, with S4 and S5 plays an important role in translational accuracy. In terms of biological role, interacts with and stabilizes bases of the 16S rRNA that are involved in tRNA selection in the A site and with the mRNA backbone. Located at the interface of the 30S and 50S subunits, it traverses the body of the 30S subunit contacting proteins on the other side and probably holding the rRNA structure together. The combined cluster of proteins S8, S12 and S17 appears to hold together the shoulder and platform of the 30S subunit. The chain is Small ribosomal subunit protein uS12 from Mycoplasmoides gallisepticum (strain R(low / passage 15 / clone 2)) (Mycoplasma gallisepticum).